The chain runs to 219 residues: Counting factor-associated protein C (219 aa).

Positions 1–16 (MKVLILLVSLISVCFS) are cleaved as a signal peptide. Asn-74 and Asn-123 each carry an N-linked (GlcNAc...) asparagine glycan.

It is found in the secreted. The sequence is that of Counting factor-associated protein C (cfaC) from Dictyostelium discoideum (Social amoeba).